Consider the following 245-residue polypeptide: MSQSTSVLRRNGFTFKQFFVAHDRCAMKVGTDGILLGAWAPVAGVKRCLDIGAGSGLLALMLAQRTDDSVMIDAVELESEAAAQAQENINQSPWAERINVHTADIQQWITQQTVRFDLIISNPPYYQQGVECSTPQREQARYTTTLDHPSLLACAAECITEEGFFCVVLPEQIGNGFTELALSMGWHLRLRTDVAENEARLPHRVLLAFSPKAGECFSDRLIIRGSDQNYSEAYTALTQAFYLFM.

Belongs to the methyltransferase superfamily. tRNA (adenine-N(6)-)-methyltransferase family.

Its subcellular location is the cytoplasm. The enzyme catalyses adenosine(37) in tRNA1(Val) + S-adenosyl-L-methionine = N(6)-methyladenosine(37) in tRNA1(Val) + S-adenosyl-L-homocysteine + H(+). Its function is as follows. Specifically methylates the adenine in position 37 of tRNA(1)(Val) (anticodon cmo5UAC). The chain is tRNA1(Val) (adenine(37)-N6)-methyltransferase from Shigella dysenteriae serotype 1 (strain Sd197).